We begin with the raw amino-acid sequence, 232 residues long: Sensory rhodopsin III (232 aa).

A run of 7 helical transmembrane segments spans residues 5 to 25 (IVWY…FVWF), 39 to 59 (LPPI…LIAG), 73 to 93 (FADW…LAGV), 100 to 120 (LAVA…SMSG), 125 to 145 (IAFA…IKTF), 168 to 188 (VVTW…TGII), and 194 to 214 (NFLV…ILLV). The residue at position 205 (Lys205) is an N6-(retinylidene)lysine.

It belongs to the archaeal/bacterial/fungal opsin family. Interacts with HtrM. Post-translationally, the covalent binding of retinal to the apoprotein, bacterioopsin, generates bacteriorhodopsin.

It localises to the membrane. Its function is as follows. Sensory rhodopsin. Associates with an unusual transducer lacking a methyl-accepting transducer domain found in all other photosensory transducers. The chromophore is all-trans-retinal in the dark. This chain is Sensory rhodopsin III (xop2), found in Haloarcula marismortui (strain ATCC 43049 / DSM 3752 / JCM 8966 / VKM B-1809) (Halobacterium marismortui).